Reading from the N-terminus, the 55-residue chain is Glycine-rich antimicrobial peptide Pg-AMP (55 aa).

Residues 18-39 are compositionally biased toward gly residues; the sequence is GYGGYGGGRYGGGYGSGRGQPV. The segment at 18 to 55 is disordered; it reads GYGGYGGGRYGGGYGSGRGQPVGQGVERSHDDNRNQPR. The segment covering 44-55 has biased composition (basic and acidic residues); the sequence is ERSHDDNRNQPR.

Monomer and homodimer. Might act by homodimer formation.

Functionally, has antibacterial activity against the Gram-negative bacteria Klebsiella sp., Proteus sp., E.coli ATCC 8739 (MIC=72 ug/ml) and K.pneumoniae (MIC=32 ug/ml). Has no activity against the Gram-negative bacterium S.typhimurium or the Gram-positive bacterium S.aureus. Does not have antifungal activity against the human and plant pathogenic fungi F.oxysporum, A.fumigatus and R.solani. This is Glycine-rich antimicrobial peptide Pg-AMP from Psidium guajava (Guava).